The chain runs to 147 residues: Large ribosomal subunit protein bL9 (147 aa).

It belongs to the bacterial ribosomal protein bL9 family.

Its function is as follows. Binds to the 23S rRNA. This Geotalea uraniireducens (strain Rf4) (Geobacter uraniireducens) protein is Large ribosomal subunit protein bL9.